The primary structure comprises 37 residues: MSKEQIIQAIKGMTVLELNELVKSIEEEFGVSAAAPV.

Belongs to the bacterial ribosomal protein bL12 family. As to quaternary structure, homodimer. Part of the ribosomal stalk of the 50S ribosomal subunit. Forms a multimeric L10(L12)X complex, where L10 forms an elongated spine to which 2 to 4 L12 dimers bind in a sequential fashion. Binds GTP-bound translation factors.

Functionally, forms part of the ribosomal stalk which helps the ribosome interact with GTP-bound translation factors. Is thus essential for accurate translation. This is Large ribosomal subunit protein bL12 (rplL) from Clostridium pasteurianum.